A 108-amino-acid polypeptide reads, in one-letter code: MQVKATAKYMRVSPQKVRKVADAVKGKPVEAGLNVLQFMPQKSAAMIAKVIRSAVANAEVGGVDVDDLVIKGVIADQGPTLKRFRARAQGRGARILKRTSHITVVLEQ.

It belongs to the universal ribosomal protein uL22 family. In terms of assembly, part of the 50S ribosomal subunit.

In terms of biological role, this protein binds specifically to 23S rRNA; its binding is stimulated by other ribosomal proteins, e.g. L4, L17, and L20. It is important during the early stages of 50S assembly. It makes multiple contacts with different domains of the 23S rRNA in the assembled 50S subunit and ribosome. Functionally, the globular domain of the protein is located near the polypeptide exit tunnel on the outside of the subunit, while an extended beta-hairpin is found that lines the wall of the exit tunnel in the center of the 70S ribosome. The polypeptide is Large ribosomal subunit protein uL22 (Desulfatibacillum aliphaticivorans).